The following is a 275-amino-acid chain: Axoneme-associated protein mst101(3) (275 aa).

A run of 12 repeats spans residues 64-79 (KKKC…EAAE), 80-95 (KKKC…EAAE), 96-111 (KKKC…EAAQ), 112-127 (KKKC…EAAE), 128-143 (KKKC…EAAE), 144-159 (RKKC…CEEA), 160-175 (AKKK…LQQK), 181-196 (KKEK…EEAA), 197-212 (KKKA…AEEV), 215-230 (KKKA…CAEA), 231-246 (KKKA…CEEA), and 249-264 (KKMC…CAEA). Positions 64–264 (KKKCAEAAKK…AALQKKCAEA (201 aa)) are 12 X 16 AA tandem repeats of [KRA]-K-[KEM]-[CKA]-[AEKD]-[EA]-[ALE]-[AMK]-[FKAML]-[KQA]-[EQKA]-[KQCEM]-[ECLA]-[AEQ]-[AEQ]-[EQAKV].

Testis.

Its subcellular location is the cytoplasm. In terms of biological role, possible structural role in the sperm tail. The chain is Axoneme-associated protein mst101(3) (mst101(3)) from Drosophila hydei (Fruit fly).